A 160-amino-acid polypeptide reads, in one-letter code: Cytochrome b6-f complex subunit 4 (160 aa).

3 helical membrane-spanning segments follow: residues 36–56 (LLYI…GLAV), 95–115 (LLGV…PFLE), and 131–151 (TVFL…TLPI).

Belongs to the cytochrome b family. PetD subfamily. As to quaternary structure, the 4 large subunits of the cytochrome b6-f complex are cytochrome b6, subunit IV (17 kDa polypeptide, petD), cytochrome f and the Rieske protein, while the 4 small subunits are petG, petL, petM and petN. The complex functions as a dimer.

The protein localises to the plastid. The protein resides in the chloroplast thylakoid membrane. Functionally, component of the cytochrome b6-f complex, which mediates electron transfer between photosystem II (PSII) and photosystem I (PSI), cyclic electron flow around PSI, and state transitions. The sequence is that of Cytochrome b6-f complex subunit 4 from Daucus carota (Wild carrot).